Consider the following 166-residue polypeptide: UPF0561 protein C2orf68 homolog (166 aa).

The span at 36–49 (RDDYDKKVKQAAKE) shows a compositional bias: basic and acidic residues. Positions 36 to 108 (RDDYDKKVKQ…EPEPPGHQLF (73 aa)) are disordered.

Belongs to the UPF0561 family.

The polypeptide is UPF0561 protein C2orf68 homolog (Bos taurus (Bovine)).